A 483-amino-acid chain; its full sequence is Bifunctional pantoate ligase/cytidylate kinase (483 aa).

Residues 1–246 form a pantoate--beta-alanine ligase region; the sequence is MPTMGALHAG…CGSTRLIDHA (246 aa). 4–11 provides a ligand contact to ATP; sequence MGALHAGH. The Proton donor role is filled by H11. Q34 is a (R)-pantoate binding site. Q34 lines the beta-alanine pocket. 124-127 contacts ATP; that stretch reads GEKD. (R)-pantoate is bound at residue Q130. Residues V153 and 161–164 contribute to the ATP site; that span reads LSSR. The tract at residues 247 to 483 is cytidylate kinase; sequence FLMTRQPLVA…AEEAWPTPQR (237 aa).

The protein in the N-terminal section; belongs to the pantothenate synthetase family. This sequence in the C-terminal section; belongs to the cytidylate kinase family. Type 1 subfamily.

The protein localises to the cytoplasm. It catalyses the reaction (R)-pantoate + beta-alanine + ATP = (R)-pantothenate + AMP + diphosphate + H(+). It carries out the reaction CMP + ATP = CDP + ADP. The catalysed reaction is dCMP + ATP = dCDP + ADP. It functions in the pathway cofactor biosynthesis; (R)-pantothenate biosynthesis; (R)-pantothenate from (R)-pantoate and beta-alanine: step 1/1. Its function is as follows. Catalyzes the condensation of pantoate with beta-alanine in an ATP-dependent reaction via a pantoyl-adenylate intermediate. In terms of biological role, catalyzes the transfer of a phosphate group from ATP to either CMP or dCMP to form CDP or dCDP and ADP, respectively. This is Bifunctional pantoate ligase/cytidylate kinase from Synechococcus sp. (strain CC9902).